The sequence spans 156 residues: MLRQILSSAVAKSTRGLSFTVNRLASNLDKSEYTTPGEIIDYDDPTHLPVPEYPLRPDEPLETRKQRLLYQSRKRGMLENDLLLSTFVAKYLRDFNADQTAQYDKLINGVSNDWDIFYWATETKATPAEYDNEIMQMLKQHVKNEERVQRIRQPDL.

The transit peptide at Met-1–Lys-12 directs the protein to the mitochondrion.

Belongs to the SDHAF2 family. Interacts with the flavoprotein subunit within the SDH catalytic dimer.

The protein localises to the mitochondrion matrix. Its function is as follows. Plays an essential role in the assembly of succinate dehydrogenase (SDH), an enzyme complex (also referred to as respiratory complex II) that is a component of both the tricarboxylic acid (TCA) cycle and the mitochondrial electron transport chain, and which couples the oxidation of succinate to fumarate with the reduction of ubiquinone (coenzyme Q) to ubiquinol. Required for flavinylation (covalent attachment of FAD) of the flavoprotein subunit of the SDH catalytic dimer. The polypeptide is Succinate dehydrogenase assembly factor 2-B, mitochondrial (Drosophila willistoni (Fruit fly)).